The following is a 384-amino-acid chain: NAD-capped RNA hydrolase NPY1 (384 aa).

Zn(2+) contacts are provided by Cys-179, Cys-182, Cys-197, and Cys-206. Residues 219 to 351 (PRTDPTVIIA…AGGYRVPFKN (133 aa)) form the Nudix hydrolase domain. Residues Ala-256, Glu-272, Glu-276, and Glu-322 each contribute to the Mg(2+) site. Substrate-binding positions include 256-258 (AGF), Glu-272, Glu-276, and Glu-322. The Nudix box motif lies at 257–278 (GFMEPSETIEEACIREIWEETG). The Microbody targeting signal motif lies at 378 to 380 (KTS).

This sequence belongs to the Nudix hydrolase family. NudC subfamily. As to quaternary structure, homodimer. The cofactor is Mg(2+). It depends on Zn(2+) as a cofactor.

It localises to the peroxisome. The enzyme catalyses a 5'-end NAD(+)-phospho-ribonucleoside in mRNA + H2O = a 5'-end phospho-adenosine-phospho-ribonucleoside in mRNA + beta-nicotinamide D-ribonucleotide + 2 H(+). The catalysed reaction is NAD(+) + H2O = beta-nicotinamide D-ribonucleotide + AMP + 2 H(+). It catalyses the reaction NADH + H2O = reduced beta-nicotinamide D-ribonucleotide + AMP + 2 H(+). In terms of biological role, mRNA decapping enzyme that specifically removes the nicotinamide adenine dinucleotide (NAD) cap from a subset of mRNAs by hydrolyzing the diphosphate linkage to produce nicotinamide mononucleotide (NMN) and 5' monophosphate mRNA. The NAD-cap is present at the 5'-end of some RNAs; in contrast to the canonical N7 methylguanosine (m7G) cap, the NAD cap promotes mRNA decay. Mediates the hydrolysis of some nucleoside diphosphate derivatives. The sequence is that of NAD-capped RNA hydrolase NPY1 from Saccharomyces cerevisiae (strain ATCC 204508 / S288c) (Baker's yeast).